The primary structure comprises 47 residues: Defensin-like protein 1 (47 aa).

4 cysteine pairs are disulfide-bonded: cysteine 3/cysteine 47, cysteine 14/cysteine 36, cysteine 20/cysteine 41, and cysteine 24/cysteine 43.

The protein belongs to the DEFL family. Protease inhibitor I18 (RTI/MTI-2) subfamily.

The protein is Defensin-like protein 1 of Sorghum bicolor (Sorghum).